The following is a 475-amino-acid chain: Mitochondrial adenyl nucleotide antiporter SLC25A24 (475 aa).

A regulatory N-terminal domain region spans residues 1-173 (MLRWLRGFVL…RFWKHSTGID (173 aa)). The Mitochondrial intermembrane portion of the chain corresponds to 1 to 197 (MLRWLRGFVL…ERKSGQWWRQ (197 aa)). EF-hand domains follow at residues 19–54 (EPPT…LGIP), 55–88 (LGQD…KDHE), 86–121 (DHEK…LGLT), and 122–157 (ISEQ…NPVA). The Ca(2+) site is built by D32, N34, D36, V38, E43, D68, N70, D72, K74, E79, D99, N101, D103, K105, E110, D135, D137, T139, T141, and E146. A linker region region spans residues 159 to 168 (IEEIIRFWKH). The C-terminal transmembrane transporter domain stretch occupies residues 174 to 475 (IGDSLTIPDE…MKQTLGVTQK (302 aa)). Solcar repeat units lie at residues 192 to 276 (GQWW…YKKL), 284 to 369 (IGTF…LKSH), and 381 to 469 (PGVL…MKQT). A helical transmembrane segment spans residues 198-215 (LLAGGIAGAVSRTSTAPL). The Mitochondrial matrix portion of the chain corresponds to 216-250 (DRLKVMMQVHGSKSMNIFGGFRQMIKEGGVRSLWR). Residues 251–270 (GNGTNVIKIAPETAVKFWVY) form a helical membrane-spanning segment. Topologically, residues 271–293 (EQYKKLLTEEGQKIGTFERFISG) are mitochondrial intermembrane. Residues 294-307 (SMAGATAQTFIYPM) traverse the membrane as a helical segment. Over 308 to 343 (EVMKTRLAVGKTGQYSGIYDCAKKILKYEGFGAFYK) the chain is Mitochondrial matrix. N6-acetyllysine; alternate is present on K318. N6-succinyllysine; alternate is present on K318. An N6-acetyllysine modification is found at K334. Residues 344–363 (GYVPNLLGIIPYAGIDLAVY) form a helical membrane-spanning segment. Topologically, residues 364–386 (ELLKSHWLDNFAKDSVNPGVLVL) are mitochondrial intermembrane. A helical transmembrane segment spans residues 387–404 (LGCGALSSTCGQLASYPL). The Mitochondrial matrix portion of the chain corresponds to 405–443 (ALVRTRMQAQAMLEGAPQLNMVGLFRRIISKEGLPGLYR). K435 carries the post-translational modification N6-acetyllysine; alternate. At K435 the chain carries N6-succinyllysine; alternate. A helical transmembrane segment spans residues 444 to 463 (GITPNFMKVLPAVGISYVVY). Topologically, residues 464-475 (ENMKQTLGVTQK) are mitochondrial intermembrane.

Belongs to the mitochondrial carrier (TC 2.A.29) family. As to quaternary structure, monomer. Mainly expressed in colon. Also expressed in the small intestine proximal to the ileum. Weakly expressed in kidney but not in the liver.

The protein resides in the mitochondrion inner membrane. It is found in the peroxisome membrane. It catalyses the reaction Mg(2+)(out) + phosphate(in) + ATP(out) = Mg(2+)(in) + phosphate(out) + ATP(in). The catalysed reaction is ADP(out) + phosphate(in) + H(+)(out) = ADP(in) + phosphate(out) + H(+)(in). The enzyme catalyses AMP(out) + phosphate(in) = AMP(in) + phosphate(out). It carries out the reaction phosphate(in) + ATP(out) + 2 H(+)(out) = phosphate(out) + ATP(in) + 2 H(+)(in). It catalyses the reaction dADP(in) + ADP(out) = dADP(out) + ADP(in). The catalysed reaction is Mg(2+)(in) + ADP(out) + ATP(in) + H(+)(out) = Mg(2+)(out) + ADP(in) + ATP(out) + H(+)(in). The enzyme catalyses ADP(out) + diphosphate(in) = ADP(in) + diphosphate(out). It carries out the reaction dAMP(in) + ADP(out) + H(+)(out) = dAMP(out) + ADP(in) + H(+)(in). It catalyses the reaction 3'-AMP(in) + ADP(out) + H(+)(out) = 3'-AMP(out) + ADP(in) + H(+)(in). The catalysed reaction is dAMP(out) + phosphate(in) = dAMP(in) + phosphate(out). The enzyme catalyses 3'-AMP(out) + phosphate(in) = 3'-AMP(in) + phosphate(out). It carries out the reaction dADP(out) + phosphate(in) + H(+)(out) = dADP(in) + phosphate(out) + H(+)(in). With respect to regulation, activated by an increase in cytosolic calcium levels that induce a conformational change of the N-terminal regulatory domain, uncapping the channel and allowing transport. Inhibited by bathophenanthroline, mersalyl, p-hydroxymercuribenzoate, bromcresol purple and tannic acid. Its function is as follows. Electroneutral antiporter that mediates the transport of adenyl nucleotides through the inner mitochondrial membrane. Originally identified as an ATP-magnesium/inorganic phosphate antiporter, it also acts as a broad specificity adenyl nucleotide antiporter. By regulating the mitochondrial matrix adenyl nucleotide pool could adapt to changing cellular energetic demands and indirectly regulate adenyl nucleotide-dependent metabolic pathways. In vitro, a low activity is also observed with guanyl and pyrimidine nucleotides. May play a role in protecting cells against oxidative stress-induced cell death, by buffering calcium levels in the mitochondrial matrix through the formation of calcium-phosphate precipitates. The chain is Mitochondrial adenyl nucleotide antiporter SLC25A24 (SLC25A24) from Oryctolagus cuniculus (Rabbit).